The chain runs to 177 residues: KxDL motif-containing protein 1 (177 aa).

M1 carries the post-translational modification N-acetylmethionine. Positions S100–E177 are disordered. The span at A125–L145 shows a compositional bias: polar residues.

The protein belongs to the KXD1 family. As to quaternary structure, component of the BLOC-one-related complex (BORC) which is composed of BLOC1S1, BLOC1S2, BORCS5, BORCS6, BORCS7, BORCS8, KXD1 and SNAPIN. Associates with the BLOC-1 complex. Interacts with BLOC1S1. Interacts with DTNBP1/BLOC1S7 (via coiled-coil domain). Widely expressed.

It is found in the lysosome membrane. In terms of biological role, as part of the BORC complex may play a role in lysosomes movement and localization at the cell periphery. Associated with the cytosolic face of lysosomes, the BORC complex may recruit ARL8B and couple lysosomes to microtubule plus-end-directed kinesin motor. May also be involved in the biogenesis of lysosome-related organelles such as melanosomes. This chain is KxDL motif-containing protein 1 (Kxd1), found in Mus musculus (Mouse).